A 510-amino-acid polypeptide reads, in one-letter code: Xylose import ATP-binding protein XylG (510 aa).

2 consecutive ABC transporter domains span residues 5–242 and 259–505; these read LEMK…VGRE and LRVE…LRSE. 37-44 lines the ATP pocket; the sequence is GENGSGKS.

It belongs to the ABC transporter superfamily. Xylose importer (TC 3.A.1.2.4) family. As to quaternary structure, the complex is composed of two ATP-binding proteins (XylG), two transmembrane proteins (XylH) and a solute-binding protein (XylF).

It localises to the cell inner membrane. It catalyses the reaction D-xylose(out) + ATP + H2O = D-xylose(in) + ADP + phosphate + H(+). In terms of biological role, part of the ABC transporter complex XylFGH involved in xylose import. Responsible for energy coupling to the transport system. This is Xylose import ATP-binding protein XylG from Yersinia pestis.